Consider the following 102-residue polypeptide: Large ribosomal subunit protein bL21 (102 aa).

This sequence belongs to the bacterial ribosomal protein bL21 family. Part of the 50S ribosomal subunit. Contacts protein L20.

In terms of biological role, this protein binds to 23S rRNA in the presence of protein L20. This chain is Large ribosomal subunit protein bL21, found in Campylobacter jejuni subsp. jejuni serotype O:6 (strain 81116 / NCTC 11828).